The sequence spans 380 residues: Coiled-coil domain-containing protein 74B (380 aa).

3 disordered regions span residues 1–51 (MSGA…KRNL), 89–108 (LIMN…HLSR), and 128–202 (GGPS…DVPQ). Polar residues predominate over residues 34-44 (LRPQSPQLRQS). Positions 47 to 93 (QKRNLDLEKSLQFLQQQHSEMLAKLHEEIEHLKRENKDLRYKLIMNQ) form a coiled coil. Residues 141–151 (RTHRPGGKHGR) are compositionally biased toward basic residues. Over residues 165–182 (DSLSTSSFQSVKSISNSG) the composition is skewed to polar residues.

The chain is Coiled-coil domain-containing protein 74B (CCDC74B) from Homo sapiens (Human).